Consider the following 321-residue polypeptide: G-protein coupled receptor aex-2 (321 aa).

The Extracellular segment spans residues 1–24 (MNSTDIIANVTKPFVENLTLGETA). Residues Asn2, Asn9, and Asn17 are each glycosylated (N-linked (GlcNAc...) asparagine). The helical transmembrane segment at 25 to 45 (FYISCGIVGTVFNALVLWIAL) threads the bilayer. Residues 46-55 (TYINTEDKPR) lie on the Cytoplasmic side of the membrane. A helical transmembrane segment spans residues 56-76 (QIIVINMTVADLLMCIVYMKT). At 77 to 90 (RPWLSHFNLWLCHP) the chain is on the extracellular side. Cysteines 88 and 161 form a disulfide. Residues 91-111 (YYVIIWTCQMCSCLNLVWLNV) form a helical membrane-spanning segment. Over 112–132 (DKLIYIQFPLHYYQIVNRKRL) the chain is Cytoplasmic. The helical transmembrane segment at 133–153 (LWITAATWGGLYAMNIALVTF) threads the bilayer. Residues 154–175 (LKITRGSCLGVSLNPYVYLLSP) are Extracellular-facing. The helical transmembrane segment at 176 to 196 (IFYVVMILTSFSLSALIYCIA) threads the bilayer. The Cytoplasmic portion of the chain corresponds to 197–221 (HNLTHMEERQRSKLFRRLFFLFSST). A helical membrane pass occupies residues 222-242 (LWTFFTCLPYRLLYLFSIFCG). The Extracellular segment spans residues 243–254 (ETCQINNYYKTA). Residues 255 to 275 (TNLFFRLLIVGIMINPVITIW) traverse the membrane as a helical segment. Topologically, residues 276–321 (TQRIYRLRLMRMFGRLRENSSTEVLMVSNRRASERPPEHTPLRCDM) are cytoplasmic.

This sequence belongs to the G-protein coupled receptor 1 family. As to expression, expressed in the intestinal muscle, anal depressor, AVL and DVB GABAergic neurons, enteric muscles, the nerve ring, the ventral nerve cord and head mesodermal cells.

It is found in the cell membrane. The protein localises to the cell projection. It localises to the cilium. Its function is as follows. G-protein coupled receptor for the nlp-40 neuropeptide. The activity of this receptor is mediated by G proteins which activate adenylyl cyclase. Plays a role in the defecation motor program, which is a coordinated series of three muscle contractions that occurs every 45 seconds. Specifically, acts in GABAergic neurons, such as AVL and DVB, to control the expulsion step of defecation. Required for fatty acid uptake and metabolism by intestinal cells and therefore regulates the levels of triglycerides in the intestine. In Caenorhabditis elegans, this protein is G-protein coupled receptor aex-2.